The chain runs to 215 residues: Glutaredoxin 2 (215 aa).

The 77-residue stretch at 1–77 (MKLYIYDHCP…YVDKLDGKPL (77 aa)) folds into the GST N-terminal domain. Cys-9 and Cys-12 are oxidised to a cystine.

The protein belongs to the glutaredoxin family.

Functionally, involved in reducing some disulfides in a coupled system with glutathione reductase. Does not act as hydrogen donor for ribonucleotide reductase. In Escherichia coli O157:H7, this protein is Glutaredoxin 2 (grxB).